Here is a 509-residue protein sequence, read N- to C-terminus: MTIAKKPLVLLIMDGWGYRPNMPDNAVANANTPVLDKLCKDYANNLLSASGMDVGLPDGQMGNSEVGHTNIGAGRTVYQNLTKVTKSISDGDFFDNKNFVDAVDQAVAAGKAVHIMGLASPGGVHSHDQHIVAAIELAAQRGAKNILVHAFLDGRDTPPRSAAGTLALFDEKYAQLGVGRTATLVGRYFAMDRDNRWDRVEQAYNLLTQAKADHTAESALAGLENAYARDENDEFVKATVIGEPAAIEDGDAVLFMNFRADRARELTYTFTDSNFSGFERASVPNVHFVTLTEFADDITAPAAFSSERLTNTLGEWLADHGKTQLRISETEKYAHVTFFFNGGVESEFKGEDRTLIKSPSVATYDMQPEMSSIELTEKLVSAIKSTKYDVIICNYPNGDMVGHTGVYDAAVKACEAVDSCVGKVVAALKEVDGECLITADHGNAEQMIDPVTGGIHTAHTNLPVPFIYVGRNAEMASGGRLCDIAPTMLNLMDMEIPAEMTGTPLITLK.

Residues Asp14 and Ser64 each contribute to the Mn(2+) site. The active-site Phosphoserine intermediate is the Ser64. Residues His125, 155 to 156 (RD), Arg187, Arg193, 259 to 262 (RADR), and Lys332 each bind substrate. The Mn(2+) site is built by Asp399, His403, Asp440, His441, and His459.

Belongs to the BPG-independent phosphoglycerate mutase family. Monomer. Mn(2+) serves as cofactor.

The enzyme catalyses (2R)-2-phosphoglycerate = (2R)-3-phosphoglycerate. Its pathway is carbohydrate degradation; glycolysis; pyruvate from D-glyceraldehyde 3-phosphate: step 3/5. Its function is as follows. Catalyzes the interconversion of 2-phosphoglycerate and 3-phosphoglycerate. This is 2,3-bisphosphoglycerate-independent phosphoglycerate mutase from Psychromonas ingrahamii (strain DSM 17664 / CCUG 51855 / 37).